A 197-amino-acid polypeptide reads, in one-letter code: dTTP/UTP pyrophosphatase (197 aa).

Residue aspartate 70 is the Proton acceptor of the active site.

The protein belongs to the Maf family. YhdE subfamily. The cofactor is a divalent metal cation.

It localises to the cytoplasm. It carries out the reaction dTTP + H2O = dTMP + diphosphate + H(+). The enzyme catalyses UTP + H2O = UMP + diphosphate + H(+). Functionally, nucleoside triphosphate pyrophosphatase that hydrolyzes dTTP and UTP. May have a dual role in cell division arrest and in preventing the incorporation of modified nucleotides into cellular nucleic acids. The protein is dTTP/UTP pyrophosphatase of Methanosarcina mazei (strain ATCC BAA-159 / DSM 3647 / Goe1 / Go1 / JCM 11833 / OCM 88) (Methanosarcina frisia).